A 372-amino-acid chain; its full sequence is Queuine tRNA-ribosyltransferase (372 aa).

Catalysis depends on Asp90, which acts as the Proton acceptor. Substrate-binding positions include 90–94, Asp144, Gln193, and Gly220; that span reads DSGGF. Residues 251–257 form an RNA binding region; sequence GVGTPED. Asp270 serves as the catalytic Nucleophile. The interval 275-279 is RNA binding; important for wobble base 34 recognition; that stretch reads TRNAR. Positions 308, 310, 313, and 339 each coordinate Zn(2+).

The protein belongs to the queuine tRNA-ribosyltransferase family. As to quaternary structure, homodimer. Within each dimer, one monomer is responsible for RNA recognition and catalysis, while the other monomer binds to the replacement base PreQ1. Zn(2+) serves as cofactor.

The catalysed reaction is 7-aminomethyl-7-carbaguanine + guanosine(34) in tRNA = 7-aminomethyl-7-carbaguanosine(34) in tRNA + guanine. The protein operates within tRNA modification; tRNA-queuosine biosynthesis. In terms of biological role, catalyzes the base-exchange of a guanine (G) residue with the queuine precursor 7-aminomethyl-7-deazaguanine (PreQ1) at position 34 (anticodon wobble position) in tRNAs with GU(N) anticodons (tRNA-Asp, -Asn, -His and -Tyr). Catalysis occurs through a double-displacement mechanism. The nucleophile active site attacks the C1' of nucleotide 34 to detach the guanine base from the RNA, forming a covalent enzyme-RNA intermediate. The proton acceptor active site deprotonates the incoming PreQ1, allowing a nucleophilic attack on the C1' of the ribose to form the product. After dissociation, two additional enzymatic reactions on the tRNA convert PreQ1 to queuine (Q), resulting in the hypermodified nucleoside queuosine (7-(((4,5-cis-dihydroxy-2-cyclopenten-1-yl)amino)methyl)-7-deazaguanosine). In Sulfurimonas denitrificans (strain ATCC 33889 / DSM 1251) (Thiomicrospira denitrificans (strain ATCC 33889 / DSM 1251)), this protein is Queuine tRNA-ribosyltransferase.